The chain runs to 363 residues: NAD(P)H-quinone oxidoreductase subunit 1, chloroplastic (363 aa).

The next 7 membrane-spanning stretches (helical) occupy residues 30-50 (FIPIFTPVLGITIGVLVIVWL), 104-124 (IAVISILVSYSVVPFGSHLVL), 129-149 (IGVFLWIAISSIAPIGLLMSG), 248-268 (YSGIKFGLFYVASYLNLLVSS), 269-289 (LFVTILYLGGWNISIPYIFVF), 300-320 (VFEPTIGMFITLAKTYLFLFI), and 336-356 (LLNLGWKFLLPISLGNLLLTT).

Belongs to the complex I subunit 1 family. In terms of assembly, NDH is composed of at least 16 different subunits, 5 of which are encoded in the nucleus.

The protein localises to the plastid. It is found in the chloroplast thylakoid membrane. The enzyme catalyses a plastoquinone + NADH + (n+1) H(+)(in) = a plastoquinol + NAD(+) + n H(+)(out). The catalysed reaction is a plastoquinone + NADPH + (n+1) H(+)(in) = a plastoquinol + NADP(+) + n H(+)(out). In terms of biological role, NDH shuttles electrons from NAD(P)H:plastoquinone, via FMN and iron-sulfur (Fe-S) centers, to quinones in the photosynthetic chain and possibly in a chloroplast respiratory chain. The immediate electron acceptor for the enzyme in this species is believed to be plastoquinone. Couples the redox reaction to proton translocation, and thus conserves the redox energy in a proton gradient. This Morus indica (Mulberry) protein is NAD(P)H-quinone oxidoreductase subunit 1, chloroplastic.